We begin with the raw amino-acid sequence, 368 residues long: MSVEYKQKNDVPDLYKILGLTNDVCKESDCDERIRKAYARKAKKYHPDKYPGKKDIVEIFELITMAYDVLKDEKQRNEYNQRLIVEKQACSDYLKLKKRYNDFADSIGELKEPSNEQKLSFKEQMKAINSKHGYDTSQETAIPANQAKKKLSSLAKERASQDVNLRPEKLFDDGRFDLGTFNAVFDKYHKKSDSSIMPHNGVPSAWNEPTNSMNFSSFDNLDNIYVDDNSRLDISRQMFGDIDFGSSLPKISKQDISDIGRADYVDGHKVLGDDYYKDLKSKISEREKDSDLFDKMKYGDYKKDTAGYGVLDQLGCDFSEIYLDKCLPGSLEEQVEKLMAERKKVIPPTEFQYLSAPVSSRTNGSVGR.

The 71-residue stretch at 13 to 83 (DLYKILGLTN…KQRNEYNQRL (71 aa)) folds into the J domain.

This is Putative J domain-containing protein R445 from Acanthamoeba polyphaga mimivirus (APMV).